Here is a 317-residue protein sequence, read N- to C-terminus: Protein KlaC (317 aa).

Its function is as follows. Belongs to the kla operon, which is associated with cryptic tellurite resistance, and IncW plasmid fertility inhibition. This Escherichia coli protein is Protein KlaC (klaC).